The chain runs to 195 residues: Imidazoleglycerol-phosphate dehydratase (195 aa).

It belongs to the imidazoleglycerol-phosphate dehydratase family.

Its subcellular location is the cytoplasm. It carries out the reaction D-erythro-1-(imidazol-4-yl)glycerol 3-phosphate = 3-(imidazol-4-yl)-2-oxopropyl phosphate + H2O. It participates in amino-acid biosynthesis; L-histidine biosynthesis; L-histidine from 5-phospho-alpha-D-ribose 1-diphosphate: step 6/9. This is Imidazoleglycerol-phosphate dehydratase from Ruegeria pomeroyi (strain ATCC 700808 / DSM 15171 / DSS-3) (Silicibacter pomeroyi).